The chain runs to 318 residues: Trans-prenyltransferase (318 aa).

Residues 1 to 21 (MLHLIYISIIVVLIIILISYT) form a helical membrane-spanning segment. Residues lysine 85, arginine 88, and histidine 122 each contribute to the isopentenyl diphosphate site. Mg(2+) is bound by residues aspartate 129 and aspartate 135. Arginine 140 lines the dimethylallyl diphosphate pocket. Arginine 141 provides a ligand contact to isopentenyl diphosphate. Dimethylallyl diphosphate is bound by residues lysine 216, threonine 217, and glutamine 254.

It belongs to the FPP/GGPP synthase family. Asfivirus trans-prenyltransferase subfamily. Mg(2+) is required as a cofactor.

It localises to the host endoplasmic reticulum. It is found in the host membrane. It catalyses the reaction isopentenyl diphosphate + dimethylallyl diphosphate = (2E)-geranyl diphosphate + diphosphate. The catalysed reaction is isopentenyl diphosphate + (2E)-geranyl diphosphate = (2E,6E)-farnesyl diphosphate + diphosphate. The enzyme catalyses isopentenyl diphosphate + (2E,6E)-farnesyl diphosphate = (2E,6E,10E)-geranylgeranyl diphosphate + diphosphate. It carries out the reaction isopentenyl diphosphate + (2E,6E,10E)-geranylgeranyl diphosphate = (2E,6E,10E,14E)-geranylfarnesyl diphosphate + diphosphate. The protein operates within isoprenoid biosynthesis; farnesyl diphosphate biosynthesis; farnesyl diphosphate from geranyl diphosphate and isopentenyl diphosphate: step 1/1. Its pathway is isoprenoid biosynthesis; geranyl diphosphate biosynthesis; geranyl diphosphate from dimethylallyl diphosphate and isopentenyl diphosphate: step 1/1. It participates in isoprenoid biosynthesis; geranylgeranyl diphosphate biosynthesis; geranylgeranyl diphosphate from farnesyl diphosphate and isopentenyl diphosphate: step 1/1. Functionally, trans-prenyltransferase that catalyzes the sequential condensation of isopentenyl diphosphate (IPP) with different allylic diphosphates, such as dimethylallyl diphosphate (DMAPP), geranyl diphosphate (GPP), farnesyl diphosphate (FPP) and geranylgeranyl diphosphate (GGPP), farnesyl diphosphate being the best allylic substrate. This chain is Trans-prenyltransferase, found in African swine fever virus (strain Badajoz 1971 Vero-adapted) (Ba71V).